A 510-amino-acid polypeptide reads, in one-letter code: Light-independent protochlorophyllide reductase subunit B (510 aa).

Asp-36 provides a ligand contact to [4Fe-4S] cluster. The active-site Proton donor is Asp-296. 431-432 (GM) provides a ligand contact to substrate.

The protein belongs to the ChlB/BchB/BchZ family. In terms of assembly, protochlorophyllide reductase is composed of three subunits; ChlL, ChlN and ChlB. Forms a heterotetramer of two ChlB and two ChlN subunits. Requires [4Fe-4S] cluster as cofactor.

It carries out the reaction chlorophyllide a + oxidized 2[4Fe-4S]-[ferredoxin] + 2 ADP + 2 phosphate = protochlorophyllide a + reduced 2[4Fe-4S]-[ferredoxin] + 2 ATP + 2 H2O. The protein operates within porphyrin-containing compound metabolism; chlorophyll biosynthesis (light-independent). Component of the dark-operative protochlorophyllide reductase (DPOR) that uses Mg-ATP and reduced ferredoxin to reduce ring D of protochlorophyllide (Pchlide) to form chlorophyllide a (Chlide). This reaction is light-independent. The NB-protein (ChlN-ChlB) is the catalytic component of the complex. The polypeptide is Light-independent protochlorophyllide reductase subunit B (Synechococcus sp. (strain JA-3-3Ab) (Cyanobacteria bacterium Yellowstone A-Prime)).